A 305-amino-acid chain; its full sequence is Aspartate carbamoyltransferase catalytic subunit (305 aa).

2 residues coordinate carbamoyl phosphate: arginine 51 and threonine 52. An L-aspartate-binding site is contributed by lysine 79. Residues arginine 101, histidine 129, and glutamine 132 each contribute to the carbamoyl phosphate site. Arginine 165 and arginine 220 together coordinate L-aspartate. Glycine 258 and proline 259 together coordinate carbamoyl phosphate.

The protein belongs to the aspartate/ornithine carbamoyltransferase superfamily. ATCase family. In terms of assembly, heterododecamer (2C3:3R2) of six catalytic PyrB chains organized as two trimers (C3), and six regulatory PyrI chains organized as three dimers (R2).

It catalyses the reaction carbamoyl phosphate + L-aspartate = N-carbamoyl-L-aspartate + phosphate + H(+). Its pathway is pyrimidine metabolism; UMP biosynthesis via de novo pathway; (S)-dihydroorotate from bicarbonate: step 2/3. Its function is as follows. Catalyzes the condensation of carbamoyl phosphate and aspartate to form carbamoyl aspartate and inorganic phosphate, the committed step in the de novo pyrimidine nucleotide biosynthesis pathway. In Rubrobacter xylanophilus (strain DSM 9941 / JCM 11954 / NBRC 16129 / PRD-1), this protein is Aspartate carbamoyltransferase catalytic subunit.